Consider the following 360-residue polypeptide: Phospho-N-acetylmuramoyl-pentapeptide-transferase (360 aa).

The next 10 membrane-spanning stretches (helical) occupy residues Ile-27–Met-47, Thr-73–Leu-93, Phe-97–Trp-117, Trp-132–Ala-152, Phe-164–Ile-184, Gly-199–Gly-219, Ala-236–Phe-256, Val-263–Ile-283, Ile-288–Val-308, and Lys-337–Leu-357.

Belongs to the glycosyltransferase 4 family. MraY subfamily. Mg(2+) is required as a cofactor.

It is found in the cell inner membrane. It catalyses the reaction UDP-N-acetyl-alpha-D-muramoyl-L-alanyl-gamma-D-glutamyl-meso-2,6-diaminopimeloyl-D-alanyl-D-alanine + di-trans,octa-cis-undecaprenyl phosphate = di-trans,octa-cis-undecaprenyl diphospho-N-acetyl-alpha-D-muramoyl-L-alanyl-D-glutamyl-meso-2,6-diaminopimeloyl-D-alanyl-D-alanine + UMP. The protein operates within cell wall biogenesis; peptidoglycan biosynthesis. Catalyzes the initial step of the lipid cycle reactions in the biosynthesis of the cell wall peptidoglycan: transfers peptidoglycan precursor phospho-MurNAc-pentapeptide from UDP-MurNAc-pentapeptide onto the lipid carrier undecaprenyl phosphate, yielding undecaprenyl-pyrophosphoryl-MurNAc-pentapeptide, known as lipid I. In Alcanivorax borkumensis (strain ATCC 700651 / DSM 11573 / NCIMB 13689 / SK2), this protein is Phospho-N-acetylmuramoyl-pentapeptide-transferase.